Consider the following 118-residue polypeptide: Large ribosomal subunit protein bL17 (118 aa).

Belongs to the bacterial ribosomal protein bL17 family. As to quaternary structure, part of the 50S ribosomal subunit. Contacts protein L32.

This is Large ribosomal subunit protein bL17 from Onion yellows phytoplasma (strain OY-M).